We begin with the raw amino-acid sequence, 926 residues long: Periplasmic nitrate reductase (926 aa).

Positions 1–30 form a signal peptide, tat-type signal; it reads MNRRDFIKSAAASAACASAGIAIPANLSAA. The 4Fe-4S Mo/W bis-MGD-type domain maps to 37–93; it reads WRWDKAACRFCGTGCGIMVATKEGKIVAVKGDPEAPVNRGLNCIKGYFNAKIMYGED. [4Fe-4S] cluster is bound by residues Cys-44, Cys-47, Cys-51, and Cys-79. Residues Lys-81, Gln-149, Asn-174, Cys-178, 211–218, Met-419, Gln-423, Asn-529, 554–555, Lys-577, Asp-604, and 816–825 contribute to the Mo-bis(molybdopterin guanine dinucleotide) site; these read WGANMAEM, SD, and TGRVLEHWHS. Trp-892 lines the substrate pocket. Residues Asn-900 and Lys-917 each coordinate Mo-bis(molybdopterin guanine dinucleotide).

Belongs to the prokaryotic molybdopterin-containing oxidoreductase family. NasA/NapA/NarB subfamily. In terms of assembly, component of the periplasmic nitrate reductase NapAB complex composed of NapA and NapB. It depends on [4Fe-4S] cluster as a cofactor. Requires Mo-bis(molybdopterin guanine dinucleotide) as cofactor. Predicted to be exported by the Tat system. The position of the signal peptide cleavage has not been experimentally proven.

The protein resides in the periplasm. It carries out the reaction 2 Fe(II)-[cytochrome] + nitrate + 2 H(+) = 2 Fe(III)-[cytochrome] + nitrite + H2O. Catalytic subunit of the periplasmic nitrate reductase complex NapAB. Receives electrons from NapB and catalyzes the reduction of nitrate to nitrite. In Campylobacter curvus (strain 525.92), this protein is Periplasmic nitrate reductase.